The primary structure comprises 396 residues: Deoxyguanosinetriphosphate triphosphohydrolase-like protein (396 aa).

One can recognise an HD domain in the interval 62 to 198; sequence RLTHSLEVAQ…AALADDIAYN (137 aa).

This sequence belongs to the dGTPase family. Type 2 subfamily.

This is Deoxyguanosinetriphosphate triphosphohydrolase-like protein from Jannaschia sp. (strain CCS1).